The chain runs to 309 residues: uncharacterized protein (309 aa).

Helical transmembrane passes span 28–48 (IIALSSLLTLLINHPSLIMKP), 73–93 (MMLNLFRWVCIAILVLVVIGW), 113–133 (LIVIDGGEQAAAVMTFLLLPI), 157–177 (ITAFISYFVIRIQVAVLYFHS), 220–240 (FVVIPTWGTLLVQIVIFAALF), and 259–279 (IFAVMLGLISFSIIMAGILIL).

The protein resides in the cell membrane. This is an uncharacterized protein from Bacillus subtilis (strain 168).